The primary structure comprises 368 residues: Quinolinate synthase (368 aa).

Iminosuccinate is bound by residues H46 and S63. C110 is a [4Fe-4S] cluster binding site. Residues 141-143 (YVN) and S162 contribute to the iminosuccinate site. C230 contributes to the [4Fe-4S] cluster binding site. Iminosuccinate-binding positions include 256–258 (HPE) and T273. Position 320 (C320) interacts with [4Fe-4S] cluster.

Belongs to the quinolinate synthase family. Type 3 subfamily. Requires [4Fe-4S] cluster as cofactor.

It is found in the cytoplasm. The enzyme catalyses iminosuccinate + dihydroxyacetone phosphate = quinolinate + phosphate + 2 H2O + H(+). The protein operates within cofactor biosynthesis; NAD(+) biosynthesis; quinolinate from iminoaspartate: step 1/1. Catalyzes the condensation of iminoaspartate with dihydroxyacetone phosphate to form quinolinate. The protein is Quinolinate synthase of Bacillus cereus (strain B4264).